Here is a 290-residue protein sequence, read N- to C-terminus: uncharacterized protein (290 aa).

The disordered stretch occupies residues 153–178; the sequence is EMVPITTSSTTPRSKGDEATSTGAFP. Residues 157-178 are compositionally biased toward polar residues; it reads ITTSSTTPRSKGDEATSTGAFP. The chain crosses the membrane as a helical span at residues 202–222; that stretch reads LIAVTLLLGGAAIIVFVIFEV. The tract at residues 246-276 is disordered; that stretch reads KEEDQKPGTTESQLDSQPEKVKHNVPNSSDS. Positions 252-261 are enriched in polar residues; that stretch reads PGTTESQLDS.

Its subcellular location is the membrane. This is an uncharacterized protein from Mus musculus (Mouse).